Reading from the N-terminus, the 462-residue chain is RuvB-like 2 (462 aa).

Residue 76–83 participates in ATP binding; the sequence is GQPGTGKT.

The protein belongs to the RuvB family. In terms of assembly, forms homohexameric rings. Can form a dodecamer with ruvbl2 made of two stacked hexameric rings. Is a component of the RNA polymerase II holoenzyme complex. Component of the chromatin-remodeling Ino80 complex. Component of some MLL1/MLL complex.

It localises to the nucleus. Its subcellular location is the dynein axonemal particle. It carries out the reaction ATP + H2O = ADP + phosphate + H(+). Has single-stranded DNA-stimulated ATPase and ATP-dependent DNA helicase (5' to 3') activity suggesting a role in nuclear processes such as recombination and transcription. Proposed core component of the chromatin remodeling INO80 complex which exhibits DNA- and nucleosome-activated ATPase activity and catalyzes ATP-dependent nucleosome sliding. Involved in the endoplasmic reticulum (ER)-associated degradation (ERAD) pathway where it negatively regulates expression of ER stress response genes. The polypeptide is RuvB-like 2 (ruvbl2) (Xenopus laevis (African clawed frog)).